The primary structure comprises 309 residues: Methionyl-tRNA formyltransferase (309 aa).

110–113 (SLLP) provides a ligand contact to (6S)-5,6,7,8-tetrahydrofolate. A disordered region spans residues 289-309 (KRMAATDWARGSRIEQGERLK). Residues 298–309 (RGSRIEQGERLK) show a composition bias toward basic and acidic residues.

The protein belongs to the Fmt family.

The catalysed reaction is L-methionyl-tRNA(fMet) + (6R)-10-formyltetrahydrofolate = N-formyl-L-methionyl-tRNA(fMet) + (6S)-5,6,7,8-tetrahydrofolate + H(+). Attaches a formyl group to the free amino group of methionyl-tRNA(fMet). The formyl group appears to play a dual role in the initiator identity of N-formylmethionyl-tRNA by promoting its recognition by IF2 and preventing the misappropriation of this tRNA by the elongation apparatus. The polypeptide is Methionyl-tRNA formyltransferase (Saccharopolyspora erythraea (strain ATCC 11635 / DSM 40517 / JCM 4748 / NBRC 13426 / NCIMB 8594 / NRRL 2338)).